Here is a 96-residue protein sequence, read N- to C-terminus: Glutamyl-tRNA(Gln) amidotransferase subunit C (96 aa).

This sequence belongs to the GatC family. Heterotrimer of A, B and C subunits.

It catalyses the reaction L-glutamyl-tRNA(Gln) + L-glutamine + ATP + H2O = L-glutaminyl-tRNA(Gln) + L-glutamate + ADP + phosphate + H(+). The enzyme catalyses L-aspartyl-tRNA(Asn) + L-glutamine + ATP + H2O = L-asparaginyl-tRNA(Asn) + L-glutamate + ADP + phosphate + 2 H(+). Its function is as follows. Allows the formation of correctly charged Asn-tRNA(Asn) or Gln-tRNA(Gln) through the transamidation of misacylated Asp-tRNA(Asn) or Glu-tRNA(Gln) in organisms which lack either or both of asparaginyl-tRNA or glutaminyl-tRNA synthetases. The reaction takes place in the presence of glutamine and ATP through an activated phospho-Asp-tRNA(Asn) or phospho-Glu-tRNA(Gln). The protein is Glutamyl-tRNA(Gln) amidotransferase subunit C of Nostoc sp. (strain PCC 7120 / SAG 25.82 / UTEX 2576).